Reading from the N-terminus, the 386-residue chain is Lipid-A-disaccharide synthase (386 aa).

This sequence belongs to the LpxB family.

The enzyme catalyses a lipid X + a UDP-2-N,3-O-bis[(3R)-3-hydroxyacyl]-alpha-D-glucosamine = a lipid A disaccharide + UDP + H(+). The protein operates within bacterial outer membrane biogenesis; LPS lipid A biosynthesis. Its function is as follows. Condensation of UDP-2,3-diacylglucosamine and 2,3-diacylglucosamine-1-phosphate to form lipid A disaccharide, a precursor of lipid A, a phosphorylated glycolipid that anchors the lipopolysaccharide to the outer membrane of the cell. In Chromobacterium violaceum (strain ATCC 12472 / DSM 30191 / JCM 1249 / CCUG 213 / NBRC 12614 / NCIMB 9131 / NCTC 9757 / MK), this protein is Lipid-A-disaccharide synthase.